An 859-amino-acid chain; its full sequence is MVSIAFYGGIPGGISTPITQQSEKSKCEENTMFQPYCYNNDSKNSMAESKEARDQEMNLKEESKEEKRRNDWWKIGMFLLCLAGTTGGILWWYEGLPQQHYIGLVAIGGRLNGSGQSNAIECWGSFPGCRPFQNYFSYETNRSMHMDNNTATLLEAYHREITFIYKSSCTDSDHCQEYQCKKVNLNSSDSSNSVRVEDVTNTAEYWGFKWLECNQTENFKTILVPENEMVNINDTDTWIPKGCNETWARVKRCPIDILYGIHPIRLCVQPPFFLVQEKGIADTSRIGNCGPTIFLGVLEDNKGVVRGDYTACNVRRLNINRKDYTGIYQVPIFYTCTFTNITSCNNEPIISVIMYETNQVQYLLCNNNNSNNYNCVVQSFGVIGQAHLELPRPNKRIRNQSFNQYNCSINNKTELETWKLVKTSGVTPLPISSEANTGLIRHKRDFGISAIVAAIVAATAIAASATMSYVALTEVNKIMEVQNHTFEVENSTLNGMDLIERQIKILYAMILQTHADVQLLKERQQVEETFNLIGCIERTHVFCHTGHPWNMSWGHLNESTQWDDWVSKMEDLNQEILTTLHGARNNLAQSMITFNTPDSIAQFGKDLWSHIGNWIPGLGASIIKYIVMFLLIYLLLTSSPKILRALWKVTSGAGSSGSRYLKKKFHHKHASREDTWDQAQHNIHLAGVTGGSGDKYYKQKYSRNDWNGESEEYNRRPKSWVKSIEAFGESYISEKTKGEISQPGAAINEHKNGSGGNNPHQGSLDLEIRSEGGNIYDCCIKAQEGTLAIPCCGFPLWLFWGLVIIVGRIAGYGLRGLAVIIRICIRGLNLIFEIIRKMLDYIGRALNPGTSHVSMPQYV.

Residues M1–F6 constitute a propeptide that is removed on maturation. The Extracellular segment spans residues Y7 to W614. 13 N-linked (GlcNAc...) asparagine; by host glycosylation sites follow: N40, N112, N141, N148, N186, N214, N233, N244, N340, N368, N399, N406, and N411. Residues F446 to T466 are fusion peptide. 2 N-linked (GlcNAc...) asparagine; by host glycosylation sites follow: N483 and N490. Positions L498–T513 are immunosuppression. Residues N550 and N557 are each glycosylated (N-linked (GlcNAc...) asparagine; by host). Coiled coils occupy residues I576–K624 and K663–Q699. Residues I615–L635 form a helical membrane-spanning segment. Residues L636–V859 are Cytoplasmic-facing.

The mature envelope protein (Env) consists of a trimer of SU-TM heterodimers attached by noncovalent interactions or by a labile interchain disulfide bond. In terms of processing, specific enzymatic cleavages in vivo yield mature proteins. Envelope glycoproteins are synthesized as an inactive precursor that is N-glycosylated and processed likely by host cell furin or by a furin-like protease in the Golgi to yield the mature SU and TM proteins. The cleavage site between SU and TM requires the minimal sequence [KR]-X-[KR]-R.

Its subcellular location is the virion membrane. The protein resides in the host cell membrane. Its function is as follows. The surface protein (SU) attaches the virus to the host cell by binding to its receptor. This interaction triggers the refolding of the transmembrane protein (TM) and is thought to activate its fusogenic potential by unmasking its fusion peptide. Fusion occurs at the host cell plasma membrane. The transmembrane protein (TM) acts as a class I viral fusion protein. Under the current model, the protein has at least 3 conformational states: pre-fusion native state, pre-hairpin intermediate state, and post-fusion hairpin state. During viral and target cell membrane fusion, the coiled coil regions (heptad repeats) assume a trimer-of-hairpins structure, positioning the fusion peptide in close proximity to the C-terminal region of the ectodomain. The formation of this structure appears to drive apposition and subsequent fusion of viral and target cell membranes. Membranes fusion leads to delivery of the nucleocapsid into the cytoplasm. This chain is Envelope glycoprotein (env), found in Equine infectious anemia virus (isolate 1369) (EIAV).